A 269-amino-acid chain; its full sequence is Gem-associated protein 2 (269 aa).

Residues Ser-70 and Ser-155 each carry the phosphoserine modification.

Belongs to the gemin-2 family. In terms of assembly, monomer. Part of the core SMN complex that contains SMN1, GEMIN2/SIP1, DDX20/GEMIN3, GEMIN4, GEMIN5, GEMIN6, GEMIN7, GEMIN8 and STRAP/UNRIP. Part of the SMN-Sm complex that contains SMN1, GEMIN2/SIP1, DDX20/GEMIN3, GEMIN4, GEMIN5, GEMIN6, GEMIN7, GEMIN8, STRAP/UNRIP and the Sm proteins SNRPB, SNRPD1, SNRPD2, SNRPD3, SNRPE, SNRPF and SNRPG. Interacts with GEMIN5; the interaction is direct. Interacts (via C-terminus) with SMN1; the interaction is direct. Interacts with SNRPD1; the interaction is direct. Interacts with SNRPD2; the interaction is direct. Interacts (via N-terminus) with SNRPF; the interaction is direct. Interacts (via N-terminus) with SNRPE; the interaction is direct. Interacts (via N-terminus) with SNRPG; the interaction is direct.

The protein resides in the nucleus. It localises to the gem. The protein localises to the cytoplasm. In terms of biological role, the SMN complex catalyzes the assembly of small nuclear ribonucleoproteins (snRNPs), the building blocks of the spliceosome, and thereby plays an important role in the splicing of cellular pre-mRNAs. Most spliceosomal snRNPs contain a common set of Sm proteins SNRPB, SNRPD1, SNRPD2, SNRPD3, SNRPE, SNRPF and SNRPG that assemble in a heptameric protein ring on the Sm site of the small nuclear RNA to form the core snRNP (Sm core). In the cytosol, the Sm proteins SNRPD1, SNRPD2, SNRPE, SNRPF and SNRPG (5Sm) are trapped in an inactive 6S pICln-Sm complex by the chaperone CLNS1A that controls the assembly of the core snRNP. To assemble core snRNPs, the SMN complex accepts the trapped 5Sm proteins from CLNS1A. Binding of snRNA inside 5Sm ultimately triggers eviction of the SMN complex, thereby allowing binding of SNRPD3 and SNRPB to complete assembly of the core snRNP. Within the SMN complex, GEMIN2 constrains the conformation of 5Sm, thereby promoting 5Sm binding to snRNA containing the snRNP code (a nonameric Sm site and a 3'-adjacent stem-loop), thus preventing progression of assembly until a cognate substrate is bound. This is Gem-associated protein 2 from Mus musculus (Mouse).